Consider the following 396-residue polypeptide: Putative pyridoxal phosphate-dependent acyltransferase (396 aa).

Residue 111–112 (GF) participates in pyridoxal 5'-phosphate binding. Histidine 136 serves as a coordination point for substrate. Pyridoxal 5'-phosphate contacts are provided by residues serine 186, 211–214 (DDAH), and 241–244 (TLSK). At lysine 244 the chain carries N6-(pyridoxal phosphate)lysine. Residue threonine 358 coordinates substrate.

It belongs to the class-II pyridoxal-phosphate-dependent aminotransferase family. In terms of assembly, homodimer. The cofactor is pyridoxal 5'-phosphate.

This chain is Putative pyridoxal phosphate-dependent acyltransferase, found in Bacillus cereus (strain ATCC 14579 / DSM 31 / CCUG 7414 / JCM 2152 / NBRC 15305 / NCIMB 9373 / NCTC 2599 / NRRL B-3711).